We begin with the raw amino-acid sequence, 266 residues long: Undecaprenyl-diphosphatase (266 aa).

The next 7 helical transmembrane spans lie at 38-58 (SDMF…IIYW), 80-100 (LIVA…VLHF), 108-128 (PIAW…WAAA), 136-156 (ITWL…IFPG), 176-196 (AAAT…ASGY), 217-237 (IAFV…LAYI), and 245-265 (FAVY…TGLI).

The protein belongs to the UppP family.

The protein localises to the cell inner membrane. It catalyses the reaction di-trans,octa-cis-undecaprenyl diphosphate + H2O = di-trans,octa-cis-undecaprenyl phosphate + phosphate + H(+). Its function is as follows. Catalyzes the dephosphorylation of undecaprenyl diphosphate (UPP). Confers resistance to bacitracin. The protein is Undecaprenyl-diphosphatase of Rhizobium leguminosarum bv. trifolii (strain WSM2304).